A 369-amino-acid polypeptide reads, in one-letter code: Histone deacetylase 8 (369 aa).

The tract at residues 5 to 316 (LLPVYIHSAE…WTYLTALIVG (312 aa)) is histone deacetylase. Asp-93 is a substrate binding site. Residue His-135 is the Proton acceptor of the active site. Gly-143 is a substrate binding site. Residues Asp-170, His-172, and Asp-259 each contribute to the a divalent metal cation site. Substrate is bound at residue Tyr-298.

This sequence belongs to the histone deacetylase family. HD type 1 subfamily. The cofactor is a divalent metal cation.

The protein localises to the nucleus. It localises to the chromosome. The protein resides in the cytoplasm. It carries out the reaction N(6)-acetyl-L-lysyl-[histone] + H2O = L-lysyl-[histone] + acetate. The catalysed reaction is N(6)-acetyl-L-lysyl-[protein] + H2O = L-lysyl-[protein] + acetate. The enzyme catalyses N(6)-(2E)-butenoyl-L-lysyl-[protein] + H2O = (2E)-2-butenoate + L-lysyl-[protein]. Its activity is inhibited by trichostatin A (TSA) and butyrate, 2 well known histone deacetylase inhibitors. Histone deacetylase that catalyzes the deacetylation of lysine residues on the N-terminal part of the core histones (H2A, H2B, H3 and H4). Histone deacetylation gives a tag for epigenetic repression and plays an important role in transcriptional regulation, cell cycle progression and developmental events. Histone deacetylases act via the formation of large multiprotein complexes. Also involved in the deacetylation of non-histone proteins. In addition to protein deacetylase activity, also has protein-lysine deacylase activity: acts as a protein decrotonylase by mediating decrotonylation ((2E)-butenoyl) of histones. The sequence is that of Histone deacetylase 8 (hdac8) from Xenopus tropicalis (Western clawed frog).